A 413-amino-acid polypeptide reads, in one-letter code: Aspartate aminotransferase, cytoplasmic (413 aa).

Residues Gly-39, Trp-141, and Asn-195 each coordinate L-aspartate. Lys-259 carries the post-translational modification N6-(pyridoxal phosphate)lysine. Residue Arg-387 participates in L-aspartate binding.

It belongs to the class-I pyridoxal-phosphate-dependent aminotransferase family. Homodimer. It depends on pyridoxal 5'-phosphate as a cofactor.

It localises to the cytoplasm. The enzyme catalyses L-aspartate + 2-oxoglutarate = oxaloacetate + L-glutamate. It catalyses the reaction L-cysteine + 2-oxoglutarate = 2-oxo-3-sulfanylpropanoate + L-glutamate. It carries out the reaction (2S)-2-aminobutanoate + 2-oxoglutarate = 2-oxobutanoate + L-glutamate. The catalysed reaction is 3-sulfino-L-alanine + 2-oxoglutarate = 3-sulfinopyruvate + L-glutamate. Functionally, biosynthesis of L-glutamate from L-aspartate or L-cysteine. Important regulator of levels of glutamate, the major excitatory neurotransmitter of the vertebrate central nervous system. Acts as a scavenger of glutamate in brain neuroprotection. The aspartate aminotransferase activity is involved in hepatic glucose synthesis during development and in adipocyte glyceroneogenesis. Using L-cysteine as substrate, regulates levels of mercaptopyruvate, an important source of hydrogen sulfide. Mercaptopyruvate is converted into H(2)S via the action of 3-mercaptopyruvate sulfurtransferase (3MST). Hydrogen sulfide is an important synaptic modulator and neuroprotectant in the brain. This Bos taurus (Bovine) protein is Aspartate aminotransferase, cytoplasmic.